Here is a 182-residue protein sequence, read N- to C-terminus: Signal peptidase I (182 aa).

Topologically, residues 1–13 (MTKQKEKRGRRWP) are cytoplasmic. The helical transmembrane segment at 14 to 30 (WFVAVCVVATLRLFVFS) threads the bilayer. The Extracellular segment spans residues 31 to 182 (NYVVEGKSMM…WPFKQFAFQF (152 aa)). Residues serine 38 and lysine 79 contribute to the active site.

The protein belongs to the peptidase S26 family.

The protein localises to the cell membrane. The enzyme catalyses Cleavage of hydrophobic, N-terminal signal or leader sequences from secreted and periplasmic proteins.. In Bacillus caldolyticus, this protein is Signal peptidase I (lepB).